The sequence spans 671 residues: DNA ligase (671 aa).

NAD(+)-binding positions include 32–36 (DAEYD), 81–82 (SL), and E113. Residue K115 is the N6-AMP-lysine intermediate of the active site. 4 residues coordinate NAD(+): R136, E173, K290, and K314. Positions 408, 411, 426, and 432 each coordinate Zn(2+). Positions 593–671 (EIDSPFAGKT…EAEMLRLLGS (79 aa)) constitute a BRCT domain.

This sequence belongs to the NAD-dependent DNA ligase family. LigA subfamily. Mg(2+) serves as cofactor. Mn(2+) is required as a cofactor.

The catalysed reaction is NAD(+) + (deoxyribonucleotide)n-3'-hydroxyl + 5'-phospho-(deoxyribonucleotide)m = (deoxyribonucleotide)n+m + AMP + beta-nicotinamide D-nucleotide.. Its function is as follows. DNA ligase that catalyzes the formation of phosphodiester linkages between 5'-phosphoryl and 3'-hydroxyl groups in double-stranded DNA using NAD as a coenzyme and as the energy source for the reaction. It is essential for DNA replication and repair of damaged DNA. In Escherichia coli (strain SE11), this protein is DNA ligase.